We begin with the raw amino-acid sequence, 219 residues long: Deoxyribose-phosphate aldolase (219 aa).

The active-site Proton donor/acceptor is Asp88. Lys150 functions as the Schiff-base intermediate with acetaldehyde in the catalytic mechanism. Lys179 functions as the Proton donor/acceptor in the catalytic mechanism.

Belongs to the DeoC/FbaB aldolase family. DeoC type 1 subfamily.

It is found in the cytoplasm. The enzyme catalyses 2-deoxy-D-ribose 5-phosphate = D-glyceraldehyde 3-phosphate + acetaldehyde. Its pathway is carbohydrate degradation; 2-deoxy-D-ribose 1-phosphate degradation; D-glyceraldehyde 3-phosphate and acetaldehyde from 2-deoxy-alpha-D-ribose 1-phosphate: step 2/2. Catalyzes a reversible aldol reaction between acetaldehyde and D-glyceraldehyde 3-phosphate to generate 2-deoxy-D-ribose 5-phosphate. This chain is Deoxyribose-phosphate aldolase, found in Aquifex aeolicus (strain VF5).